The following is a 278-amino-acid chain: Large ribosomal subunit protein uL2 (278 aa).

Disordered stretches follow at residues 1–58 and 210–278; these read MGIR…GGGH and GRMR…GKKR. The span at 23-33 shows a compositional bias: basic and acidic residues; it reads EVTRSEPEKSL. Low complexity predominate over residues 40-49; sequence SGGRNSTGRI. Basic residues-rich tracts occupy residues 210-220 and 269-278; these read GRMRWKGKRPS and VRRRRTGKKR.

It belongs to the universal ribosomal protein uL2 family. Part of the 50S ribosomal subunit. Forms a bridge to the 30S subunit in the 70S ribosome.

One of the primary rRNA binding proteins. Required for association of the 30S and 50S subunits to form the 70S ribosome, for tRNA binding and peptide bond formation. It has been suggested to have peptidyltransferase activity; this is somewhat controversial. Makes several contacts with the 16S rRNA in the 70S ribosome. The sequence is that of Large ribosomal subunit protein uL2 from Beutenbergia cavernae (strain ATCC BAA-8 / DSM 12333 / CCUG 43141 / JCM 11478 / NBRC 16432 / NCIMB 13614 / HKI 0122).